Here is a 490-residue protein sequence, read N- to C-terminus: Colicin-10 (490 aa).

Polar residues predominate over residues 1–20 (MDKVTDNSPDVESTESTEGS). Disordered regions lie at residues 1-29 (MDKV…VDTG) and 146-171 (QKAR…EIAR). The segment covering 146–170 (QKAREEAEAAEKALREAERQRDEIA) has biased composition (basic and acidic residues). A helical membrane pass occupies residues 447–467 (IVALMFSFIVGAPLGFWGIAI).

It belongs to the channel forming colicin family.

The protein resides in the host membrane. In terms of biological role, this colicin is a channel-forming colicin. This class of transmembrane toxins depolarize the cytoplasmic membrane, leading to dissipation of cellular energy. Colicins are polypeptide toxins produced by and active against E.coli and closely related bacteria. The protein is Colicin-10 (cta) of Escherichia coli.